Here is a 95-residue protein sequence, read N- to C-terminus: Aspartyl/glutamyl-tRNA(Asn/Gln) amidotransferase subunit C (95 aa).

The protein belongs to the GatC family. As to quaternary structure, heterotrimer of A, B and C subunits.

It catalyses the reaction L-glutamyl-tRNA(Gln) + L-glutamine + ATP + H2O = L-glutaminyl-tRNA(Gln) + L-glutamate + ADP + phosphate + H(+). The enzyme catalyses L-aspartyl-tRNA(Asn) + L-glutamine + ATP + H2O = L-asparaginyl-tRNA(Asn) + L-glutamate + ADP + phosphate + 2 H(+). Functionally, allows the formation of correctly charged Asn-tRNA(Asn) or Gln-tRNA(Gln) through the transamidation of misacylated Asp-tRNA(Asn) or Glu-tRNA(Gln) in organisms which lack either or both of asparaginyl-tRNA or glutaminyl-tRNA synthetases. The reaction takes place in the presence of glutamine and ATP through an activated phospho-Asp-tRNA(Asn) or phospho-Glu-tRNA(Gln). In Campylobacter curvus (strain 525.92), this protein is Aspartyl/glutamyl-tRNA(Asn/Gln) amidotransferase subunit C.